We begin with the raw amino-acid sequence, 161 residues long: Large ribosomal subunit protein uL11 (161 aa).

The protein belongs to the universal ribosomal protein uL11 family. Part of the ribosomal stalk of the 50S ribosomal subunit. Interacts with L10 and the large rRNA to form the base of the stalk. L10 forms an elongated spine to which L12 dimers bind in a sequential fashion forming a multimeric L10(L12)X complex.

Its function is as follows. Forms part of the ribosomal stalk which helps the ribosome interact with GTP-bound translation factors. This is Large ribosomal subunit protein uL11 from Methanosarcina barkeri (strain Fusaro / DSM 804).